We begin with the raw amino-acid sequence, 217 residues long: Proteasome subunit beta type-9 (217 aa).

A propeptide spans 1–18 (removed in mature form); sequence MLDESLEPGWLSEEVKTG. Thr-19 (nucleophile) is an active-site residue.

It belongs to the peptidase T1B family. In terms of assembly, the 26S proteasome consists of a 20S proteasome core and two 19S regulatory subunits. The 20S proteasome core is composed of 28 subunits that are arranged in four stacked rings, resulting in a barrel-shaped structure. The two end rings are each formed by seven alpha subunits, and the two central rings are each formed by seven beta subunits. The catalytic chamber with the active sites is on the inside of the barrel. Component of the immunoproteasome, where it displaces the equivalent housekeeping subunit PSMB6. Post-translationally, autocleaved. The resulting N-terminal Thr residue of the mature subunit is responsible for the nucleophile proteolytic activity.

The protein resides in the cytoplasm. Its subcellular location is the nucleus. It carries out the reaction Cleavage of peptide bonds with very broad specificity.. In terms of biological role, the proteasome is a multicatalytic proteinase complex which is characterized by its ability to cleave peptides with Arg, Phe, Tyr, Leu, and Glu adjacent to the leaving group at neutral or slightly basic pH. The proteasome has an ATP-dependent proteolytic activity. This subunit is involved in antigen processing to generate class I binding peptides. The protein is Proteasome subunit beta type-9 (psmb9) of Oncorhynchus mykiss (Rainbow trout).